The chain runs to 208 residues: Small ribosomal subunit protein uS4 (208 aa).

The segment at 28–48 (YMERRPYGPGEHGRARKKQDS) is disordered. The region spanning 95–160 (MRLDALVLRA…MPPFQVAAAG (66 aa)) is the S4 RNA-binding domain.

Belongs to the universal ribosomal protein uS4 family. Part of the 30S ribosomal subunit. Contacts protein S5. The interaction surface between S4 and S5 is involved in control of translational fidelity.

Its function is as follows. One of the primary rRNA binding proteins, it binds directly to 16S rRNA where it nucleates assembly of the body of the 30S subunit. In terms of biological role, with S5 and S12 plays an important role in translational accuracy. In Arthrobacter sp. (strain FB24), this protein is Small ribosomal subunit protein uS4.